A 198-amino-acid chain; its full sequence is GTP-binding protein Di-Ras1 (198 aa).

GTP-binding positions include 17-22, 33-39, 61-65, 121-125, Ala151, and 151-152; these read GVGKSS, RDTYIPT, DTTGS, NKCDE, and AK. The Effector region motif lies at 36–44; that stretch reads YIPTIEDTY. Over residues 178-192 the composition is skewed to basic and acidic residues; that stretch reads DGKRSGKQKRTDRVK. The interval 178-198 is disordered; it reads DGKRSGKQKRTDRVKGKCTLM. Cys195 carries the cysteine methyl ester modification. Cys195 is lipidated: S-geranylgeranyl cysteine. The propeptide at 196–198 is removed in mature form; it reads TLM.

It belongs to the small GTPase superfamily. Di-Ras family. As to expression, highly expressed in heart and brain.

It localises to the cell membrane. Functionally, displays low GTPase activity and exists predominantly in the GTP-bound form. The chain is GTP-binding protein Di-Ras1 (DIRAS1) from Homo sapiens (Human).